Reading from the N-terminus, the 474-residue chain is Nuclear hormone receptor family member nhr-91 (474 aa).

The disordered stretch occupies residues 50-69; the sequence is SMTPSFSQTESPNSETDDST. Residues 51-69 show a composition bias toward polar residues; it reads MTPSFSQTESPNSETDDST. A DNA-binding region (nuclear receptor) is located at residues 97-172; it reads SKLCSVCGDK…KGMLTEAVRE (76 aa). 2 consecutive NR C4-type zinc fingers follow at residues 100–120 and 136–155; these read CSVC…CEGC and CSQD…CQSC. Residues 215–474 enclose the NR LBD domain; it reads SGKKLIKELV…KNPRRLVFDE (260 aa).

Belongs to the nuclear hormone receptor family.

Its subcellular location is the nucleus. Orphan nuclear receptor. In Caenorhabditis elegans, this protein is Nuclear hormone receptor family member nhr-91 (nhr-91).